A 247-amino-acid polypeptide reads, in one-letter code: Cytochrome c oxidase subunit 2 (247 aa).

The Mitochondrial intermembrane segment spans residues 12–38; that stretch reads DVPTPWGLYFQDSSTPNQEGIIELHDN. Residues 39–59 traverse the membrane as a helical segment; that stretch reads IMFYLVLILCTVSWLLFSIVK. Residues 60–78 are Mitochondrial matrix-facing; it reads DSSKNPLPHKYLVHGQTIE. The chain crosses the membrane as a helical span at residues 79–101; the sequence is IIWTILPAVVLLIIAFPSFILLY. The Mitochondrial intermembrane portion of the chain corresponds to 102–247; sequence LCDEVISPAM…KEFLTWLNEQ (146 aa). Cu cation-binding residues include His-182, Cys-217, Glu-219, Cys-221, His-225, and Met-228. Glu-219 provides a ligand contact to Mg(2+).

This sequence belongs to the cytochrome c oxidase subunit 2 family. Component of the cytochrome c oxidase (complex IV, CIV), a multisubunit enzyme composed of a catalytic core of 3 subunits and several supernumerary subunits. The complex exists as a monomer or a dimer and forms supercomplexes (SCs) in the inner mitochondrial membrane with ubiquinol-cytochrome c oxidoreductase (cytochrome b-c1 complex, complex III, CIII). Cu cation is required as a cofactor. The signal sequence of COX2 is processed by IMP1.

It is found in the mitochondrion inner membrane. The enzyme catalyses 4 Fe(II)-[cytochrome c] + O2 + 8 H(+)(in) = 4 Fe(III)-[cytochrome c] + 2 H2O + 4 H(+)(out). Functionally, component of the cytochrome c oxidase, the last enzyme in the mitochondrial electron transport chain which drives oxidative phosphorylation. The respiratory chain contains 3 multisubunit complexes succinate dehydrogenase (complex II, CII), ubiquinol-cytochrome c oxidoreductase (cytochrome b-c1 complex, complex III, CIII) and cytochrome c oxidase (complex IV, CIV), that cooperate to transfer electrons derived from NADH and succinate to molecular oxygen, creating an electrochemical gradient over the inner membrane that drives transmembrane transport and the ATP synthase. Cytochrome c oxidase is the component of the respiratory chain that catalyzes the reduction of oxygen to water. Electrons originating from reduced cytochrome c in the intermembrane space (IMS) are transferred via the dinuclear copper A center (CU(A)) of subunit 2 and heme A of subunit 1 to the active site in subunit 1, a binuclear center (BNC) formed by heme A3 and copper B (CU(B)). The BNC reduces molecular oxygen to 2 water molecules using 4 electrons from cytochrome c in the IMS and 4 protons from the mitochondrial matrix. This chain is Cytochrome c oxidase subunit 2 (COX2), found in Cyberlindnera mrakii (Yeast).